The sequence spans 189 residues: UPF0301 protein PLES_04031 (189 aa).

The protein belongs to the UPF0301 (AlgH) family.

In Pseudomonas aeruginosa (strain LESB58), this protein is UPF0301 protein PLES_04031.